We begin with the raw amino-acid sequence, 563 residues long: MDYKNLVAERIKENTELEVDLIEKLIEIPPKKEMGDYAFPCFQLAKTFRKAPNLIAEELKEKINKEGFEKVVTVGPYLNFFVDKTILIKDVLEKVLSEKEKYGSSKVGEGKNVVVEYSSPNIAKPFHIGHLFTTAIGNALYKILSFEGYNCIGINHLGDWGTQFGKLISAYRRWVDEEALEKDAIGELLRIYVKFHEEAEKDPELEKEARLNFKRLEDGSEEETELWNRFKDLSLKEFNKVYDMLGIKFDSLAGESFYSDKMDAVVQEIDDKGLLVDSNGAKVVMLDEYNMPPCMIKKSDGATIYATRDLAAAIYRKKTYDFHKCIYVVGTPQALHFKQVFTTLKLMGHDWADDCKHVGFGLVKLANKKLSTRNGDVVFLEDLLNQSVEETLKIINEKNPNLKNKEDVAKKLGIGAVVFTYLKNNRERDIVFDWKEILSFDGETGPYVEYSYARGKSILRKAGELTGEADYSKLSSKEEFELAKLLGGFNDAIMNAIDKLEPAMVTRYIIEVAKAFNKFYNAHGILNAEDNDVKLARVKLVEATCQVIKNALNLLGIDVVEEM.

The short motif at 120–130 is the 'HIGH' region element; the sequence is PNIAKPFHIGH.

It belongs to the class-I aminoacyl-tRNA synthetase family. In terms of assembly, monomer.

Its subcellular location is the cytoplasm. The enzyme catalyses tRNA(Arg) + L-arginine + ATP = L-arginyl-tRNA(Arg) + AMP + diphosphate. This Clostridium botulinum (strain Okra / Type B1) protein is Arginine--tRNA ligase.